The primary structure comprises 350 residues: SUMO-activating enzyme subunit 1 (350 aa).

M1 carries the N-acetylmethionine modification. Position 2 is an N-acetylvaline; in SUMO-activating enzyme subunit 1, N-terminally processed (V2). S16 carries the post-translational modification Phosphoserine. Residue K202 is modified to N6-acetyllysine.

Belongs to the ubiquitin-activating E1 family. Heterodimer of SAE1 and UBA2/SAE2. The heterodimer corresponds to the two domains that are encoded on a single polypeptide chain in ubiquitin-activating enzyme E1. Interacts with UBE2I. In terms of tissue distribution, broadly expressed, with highest levels in testis.

The protein resides in the nucleus. The protein operates within protein modification; protein sumoylation. In terms of biological role, the heterodimer acts as an E1 ligase for SUMO1, SUMO2, SUMO3, and probably SUMO4. It mediates ATP-dependent activation of SUMO proteins followed by formation of a thioester bond between a SUMO protein and a conserved active site cysteine residue on UBA2/SAE2. The chain is SUMO-activating enzyme subunit 1 (Sae1) from Mus musculus (Mouse).